The chain runs to 452 residues: Serine carboxypeptidase-like 26 (452 aa).

A signal peptide spans 1-20 (MARLLLLFFFFLILLHYASC). N-linked (GlcNAc...) asparagine glycans are attached at residues asparagine 52 and asparagine 138. 3 cysteine pairs are disulfide-bonded: cysteine 87–cysteine 338, cysteine 244–cysteine 256, and cysteine 280–cysteine 306. Serine 180 is a catalytic residue. A glycan (N-linked (GlcNAc...) asparagine) is linked at asparagine 327. Catalysis depends on residues aspartate 375 and histidine 427.

This sequence belongs to the peptidase S10 family. Ubiquitous.

The protein resides in the secreted. Probable carboxypeptidase. This Arabidopsis thaliana (Mouse-ear cress) protein is Serine carboxypeptidase-like 26 (SCPL26).